Consider the following 190-residue polypeptide: Vespryn-21 (190 aa).

The signal sequence occupies residues 1–20; it reads MLLFTLCFFADLENGGKALA. Residues 21–127 enclose the B30.2/SPRY domain; it reads SPPGKWQKAD…LIWQRGLWFL (107 aa). Residues 128 to 190 constitute a propeptide that is removed on maturation; it reads QRLETDSDKL…LGGGVSLTNL (63 aa).

This sequence belongs to the ohanin/vespryn family. As to expression, expressed by the venom gland.

It localises to the secreted. Its function is as follows. Neurotoxin that produces dose-dependent hypolocomotion and hyperalgesia in mice. May directly act on the central nervous system, as it is 6500-fold more potent when administered intracerebroventricularly than intraperitoneal. In Drysdalia coronoides (White-lipped snake), this protein is Vespryn-21.